Reading from the N-terminus, the 218-residue chain is Thiamine-phosphate synthase (218 aa).

Residues 46–50 and D83 each bind 4-amino-2-methyl-5-(diphosphooxymethyl)pyrimidine; that span reads QFRDK. Residues D84 and D103 each coordinate Mg(2+). S122 contacts 4-amino-2-methyl-5-(diphosphooxymethyl)pyrimidine. 149-151 contributes to the 2-[(2R,5Z)-2-carboxy-4-methylthiazol-5(2H)-ylidene]ethyl phosphate binding site; the sequence is TNS. K152 is a 4-amino-2-methyl-5-(diphosphooxymethyl)pyrimidine binding site. 2-[(2R,5Z)-2-carboxy-4-methylthiazol-5(2H)-ylidene]ethyl phosphate-binding positions include G181 and 201–202; that span reads IT.

The protein belongs to the thiamine-phosphate synthase family. Requires Mg(2+) as cofactor.

The enzyme catalyses 2-[(2R,5Z)-2-carboxy-4-methylthiazol-5(2H)-ylidene]ethyl phosphate + 4-amino-2-methyl-5-(diphosphooxymethyl)pyrimidine + 2 H(+) = thiamine phosphate + CO2 + diphosphate. It carries out the reaction 2-(2-carboxy-4-methylthiazol-5-yl)ethyl phosphate + 4-amino-2-methyl-5-(diphosphooxymethyl)pyrimidine + 2 H(+) = thiamine phosphate + CO2 + diphosphate. It catalyses the reaction 4-methyl-5-(2-phosphooxyethyl)-thiazole + 4-amino-2-methyl-5-(diphosphooxymethyl)pyrimidine + H(+) = thiamine phosphate + diphosphate. Its pathway is cofactor biosynthesis; thiamine diphosphate biosynthesis; thiamine phosphate from 4-amino-2-methyl-5-diphosphomethylpyrimidine and 4-methyl-5-(2-phosphoethyl)-thiazole: step 1/1. In terms of biological role, condenses 4-methyl-5-(beta-hydroxyethyl)thiazole monophosphate (THZ-P) and 2-methyl-4-amino-5-hydroxymethyl pyrimidine pyrophosphate (HMP-PP) to form thiamine monophosphate (TMP). In Actinobacillus pleuropneumoniae serotype 7 (strain AP76), this protein is Thiamine-phosphate synthase.